Reading from the N-terminus, the 160-residue chain is Ribosomal RNA large subunit methyltransferase H (160 aa).

Residue Gly108 coordinates S-adenosyl-L-methionine.

Belongs to the RNA methyltransferase RlmH family. As to quaternary structure, homodimer.

Its subcellular location is the cytoplasm. It carries out the reaction pseudouridine(1915) in 23S rRNA + S-adenosyl-L-methionine = N(3)-methylpseudouridine(1915) in 23S rRNA + S-adenosyl-L-homocysteine + H(+). In terms of biological role, specifically methylates the pseudouridine at position 1915 (m3Psi1915) in 23S rRNA. This Rhodopseudomonas palustris (strain BisA53) protein is Ribosomal RNA large subunit methyltransferase H.